The sequence spans 518 residues: 12S seed storage globulin 2 (518 aa).

The signal sequence occupies residues 1-24; it reads MATTRFPSLLFYSYIFLLCNGSMA. 2 disulfides stabilise this stretch: Cys45–Cys78 and Cys121–Cys324. The Cupin type-1 1 domain maps to 50–240; sequence LQAFEPLRQV…ALGISQQVAQ (191 aa). The interval 280-311 is disordered; that stretch reads IQSQEEQSTQYQVGQSPQYQEGQSTQYQPGQS. In terms of domain architecture, Cupin type-1 2 spans 330–479; that stretch reads QNIENPKRAD…AYRISRQEAQ (150 aa). Positions 482 to 518 are disordered; that stretch reads KNNRGEEFDAFTPKFTQTGSQSYQDEGESSSTEKASE. Residues 495–518 are compositionally biased toward polar residues; it reads KFTQTGSQSYQDEGESSSTEKASE.

It belongs to the 11S seed storage protein (globulins) family. As to quaternary structure, hexamer; each subunit is composed of an acidic and a basic chain derived from a single precursor and linked by a disulfide bond.

This is a seed storage protein. The sequence is that of 12S seed storage globulin 2 from Avena sativa (Oat).